Here is a 320-residue protein sequence, read N- to C-terminus: Putative GDP-polyphosphate phosphotransferase PKK2A (320 aa).

Disordered stretches follow at residues 1–21, 246–267, and 281–320; these read MRKK…PKLD, RPLP…PPRD, and EERI…KSKK. The segment covering 12–21 has biased composition (basic and acidic residues); that stretch reads DFRKNPPKLD. The span at 281 to 290 shows a compositional bias: basic and acidic residues; it reads EERIKKEEKA.

This sequence belongs to the polyphosphate kinase 2 (PPK2) family. Class I subfamily.

It carries out the reaction [phosphate](n) + GTP = [phosphate](n+1) + GDP. The chain is Putative GDP-polyphosphate phosphotransferase PKK2A from Corynebacterium glutamicum (strain ATCC 13032 / DSM 20300 / JCM 1318 / BCRC 11384 / CCUG 27702 / LMG 3730 / NBRC 12168 / NCIMB 10025 / NRRL B-2784 / 534).